We begin with the raw amino-acid sequence, 285 residues long: 2,3,4,5-tetrahydropyridine-2,6-dicarboxylate N-succinyltransferase (285 aa).

Belongs to the transferase hexapeptide repeat family.

It localises to the cytoplasm. It carries out the reaction (S)-2,3,4,5-tetrahydrodipicolinate + succinyl-CoA + H2O = (S)-2-succinylamino-6-oxoheptanedioate + CoA. Its pathway is amino-acid biosynthesis; L-lysine biosynthesis via DAP pathway; LL-2,6-diaminopimelate from (S)-tetrahydrodipicolinate (succinylase route): step 1/3. The chain is 2,3,4,5-tetrahydropyridine-2,6-dicarboxylate N-succinyltransferase from Beijerinckia indica subsp. indica (strain ATCC 9039 / DSM 1715 / NCIMB 8712).